We begin with the raw amino-acid sequence, 252 residues long: Carboxy-S-adenosyl-L-methionine synthase (252 aa).

S-adenosyl-L-methionine-binding positions include Y45, 70-72 (GCS), 95-96 (DN), 123-124 (DI), N138, and R205.

This sequence belongs to the class I-like SAM-binding methyltransferase superfamily. Cx-SAM synthase family. In terms of assembly, homodimer.

The enzyme catalyses prephenate + S-adenosyl-L-methionine = carboxy-S-adenosyl-L-methionine + 3-phenylpyruvate + H2O. Its function is as follows. Catalyzes the conversion of S-adenosyl-L-methionine (SAM) to carboxy-S-adenosyl-L-methionine (Cx-SAM). This is Carboxy-S-adenosyl-L-methionine synthase from Photorhabdus laumondii subsp. laumondii (strain DSM 15139 / CIP 105565 / TT01) (Photorhabdus luminescens subsp. laumondii).